A 424-amino-acid chain; its full sequence is Tyrosine--tRNA ligase (424 aa).

Position 37 (Tyr37) interacts with L-tyrosine. Residues 42–51 carry the 'HIGH' region motif; it reads PTADSLHLGH. An N6-acetyllysine modification is found at Lys144. Positions 175 and 179 each coordinate L-tyrosine. The 'KMSKS' region motif lies at 235 to 239; sequence KFGKT. Lys238 serves as a coordination point for ATP. Residues 357–414 form the S4 RNA-binding domain; it reads ADLMQALVDSELQPSRGQARKTIASNAITINGEKQSDPEYFFKEEDRLFGRFTLLRRG.

Belongs to the class-I aminoacyl-tRNA synthetase family. TyrS type 1 subfamily. In terms of assembly, homodimer.

It is found in the cytoplasm. The enzyme catalyses tRNA(Tyr) + L-tyrosine + ATP = L-tyrosyl-tRNA(Tyr) + AMP + diphosphate + H(+). Catalyzes the attachment of tyrosine to tRNA(Tyr) in a two-step reaction: tyrosine is first activated by ATP to form Tyr-AMP and then transferred to the acceptor end of tRNA(Tyr). This Shigella boydii serotype 4 (strain Sb227) protein is Tyrosine--tRNA ligase.